The primary structure comprises 370 residues: MVNVRQPRDVAQILLSVLFLAIMIVACLWIVQPFILGFAWAGTVVIATWPVLLRLQKIMFGRRSLAVLVMTLLLVMVFIIPIALLVNSIVDGSGPLIKAISSGDMTLPDLAWLNTIPVIGAKLYAGWHNLLDMGGTAIMAKVRPYIGTTTTWFVGQAAHIGRFMVHCALMLLFSALLYWRGEQVAQGIRHFATRLAGVRGDAAVLLAAQAIRAVALGVVVTALVQAVLGGIGLAVSGVPYATLLTVLMILSCLVQLGPLPVLIPAIIWLYWTGDTTWGTVLLVWSGVVGTLDNVIRPMLIRMGADLPLILILSGVIGGLIAFGMIGLFIGPVLLAVSWRLFAAWVEEVPPPTDQPEEILEELGEIEKPNK.

Over 1-17 the chain is Periplasmic; sequence MVNVRQPRDVAQILLSV. Residues 18–38 traverse the membrane as a helical segment; sequence LFLAIMIVACLWIVQPFILGF. Alanine 39 is a topological domain (cytoplasmic). A helical transmembrane segment spans residues 40 to 60; sequence WAGTVVIATWPVLLRLQKIMF. The Periplasmic segment spans residues 61-65; sequence GRRSL. A helical membrane pass occupies residues 66–86; it reads AVLVMTLLLVMVFIIPIALLV. Topologically, residues 87–106 are cytoplasmic; the sequence is NSIVDGSGPLIKAISSGDMT. Residues 107–127 traverse the membrane as a helical segment; the sequence is LPDLAWLNTIPVIGAKLYAGW. The Periplasmic segment spans residues 128–156; sequence HNLLDMGGTAIMAKVRPYIGTTTTWFVGQ. The helical transmembrane segment at 157–177 threads the bilayer; sequence AAHIGRFMVHCALMLLFSALL. Residues 178–213 lie on the Cytoplasmic side of the membrane; sequence YWRGEQVAQGIRHFATRLAGVRGDAAVLLAAQAIRA. Residues 214-234 traverse the membrane as a helical segment; the sequence is VALGVVVTALVQAVLGGIGLA. Residues 235 to 248 are Periplasmic-facing; the sequence is VSGVPYATLLTVLM. The helical transmembrane segment at 249–269 threads the bilayer; the sequence is ILSCLVQLGPLPVLIPAIIWL. The Cytoplasmic segment spans residues 270–274; the sequence is YWTGD. The chain crosses the membrane as a helical span at residues 275–295; sequence TTWGTVLLVWSGVVGTLDNVI. The Periplasmic segment spans residues 296–308; sequence RPMLIRMGADLPL. The helical transmembrane segment at 309 to 329 threads the bilayer; the sequence is ILILSGVIGGLIAFGMIGLFI. Topologically, residues 330–370 are cytoplasmic; sequence GPVLLAVSWRLFAAWVEEVPPPTDQPEEILEELGEIEKPNK.

Belongs to the autoinducer-2 exporter (AI-2E) (TC 2.A.86) family.

It localises to the cell inner membrane. The sequence is that of Putative transport protein YdiK (ydiK) from Escherichia coli (strain K12).